The chain runs to 231 residues: Large ribosomal subunit protein uL1 (231 aa).

The protein belongs to the universal ribosomal protein uL1 family. In terms of assembly, part of the 50S ribosomal subunit.

Binds directly to 23S rRNA. The L1 stalk is quite mobile in the ribosome, and is involved in E site tRNA release. In terms of biological role, protein L1 is also a translational repressor protein, it controls the translation of the L11 operon by binding to its mRNA. The protein is Large ribosomal subunit protein uL1 of Hydrogenovibrio crunogenus (strain DSM 25203 / XCL-2) (Thiomicrospira crunogena).